Reading from the N-terminus, the 225-residue chain is Polyadenylate-binding protein 2 (225 aa).

A compositionally biased stretch (acidic residues) spans 1–36 (MADEDISLNEDQLLESMEETNGEQETEIVTETEEEG). The tract at residues 1–42 (MADEDISLNEDQLLESMEETNGEQETEIVTETEEEGSMQIDP) is disordered. Positions 14-74 (LESMEETNGE…QSEVDKQMAG (61 aa)) form a coiled coil. One can recognise an RRM domain in the interval 96–173 (RSVYVGNVDY…RQIKVMSKRT (78 aa)).

Its subcellular location is the nucleus. The protein resides in the cytoplasm. Its function is as follows. Involved in the 3'-end formation of mRNA precursors (pre-mRNA) by the addition of a poly(A) tail of 200-250 nt to the upstream cleavage product. Stimulates poly(A) polymerase (PAPOLA) conferring processivity on the poly(A) tail elongation reaction and also controls the poly(A) tail length. Increases the affinity of poly(A) polymerase for RNA. Binds to poly(A) and to poly(G) with high affinity. May protect the poly(A) tail from degradation. In Drosophila pseudoobscura pseudoobscura (Fruit fly), this protein is Polyadenylate-binding protein 2.